The sequence spans 476 residues: Protein transport protein Sec61 subunit alpha (476 aa).

The Cytoplasmic portion of the chain corresponds to 2–33 (GIKFLEVIKPFCAVLPEIQKPERKIQFREKVL). The helical transmembrane segment at 34-53 (WTAITLFIFLVCCQIPLFGI) threads the bilayer. Over 54 to 76 (MSSDSADPFYWMRVILASNRGTL) the chain is Lumenal. A helical membrane pass occupies residues 77 to 96 (MELGISPIVTSDLIMQLLAG). At 97-117 (AKIIEVGDSPKDRALFNGAQK) the chain is on the cytoplasmic side. Residues 118 to 138 (LFGMIITIGQAIVYVMTGMYG) form a helical membrane-spanning segment. Over 139 to 144 (DPSEMG) the chain is Lumenal. The chain crosses the membrane as a helical span at residues 145 to 165 (AGICLVIIIQLFVAGLIVLLL). At 166–172 (DELLQKG) the chain is on the cytoplasmic side. Residues 173 to 193 (YGLGSGISLLIATNICETIVW) form a helical membrane-spanning segment. Over 194-240 (KAFSPTTVNTGRGTEFEGAIIALFHLLATRTDKVRALREAFYRQNLP) the chain is Lumenal. A helical transmembrane segment spans residues 241–261 (NLMNLIATVFVFAVVIYFQGF). At 262 to 288 (RVDLPIKSARYRGQYNTYPIKLFYTSN) the chain is on the cytoplasmic side. Residues 289–309 (IPIILQSALVSNLYVISQMLS) traverse the membrane as a helical segment. Topologically, residues 310 to 354 (TRFSGNFIVNLLGTWSDTSTGGPARAYPVGGLCYFLSPPESFGSV) are lumenal. Residues 355–375 (LDDPVHAAIYIVFMLGSCAFF) traverse the membrane as a helical segment. Residues 376 to 420 (SKTWIEVSGSSAKDVAKQLKEQQMVMRGHRETSMVHELNRYIPTA) are Cytoplasmic-facing. Residues 421-441 (AAFGGLCIGGLSVMADFLGAI) traverse the membrane as a helical segment. The Lumenal portion of the chain corresponds to 442 to 445 (GSGT). A helical transmembrane segment spans residues 446-462 (GILLAVTIIYQYFEIFV). Over 463–476 (KEQSEMGSMGGLFF) the chain is Cytoplasmic.

It belongs to the SecY/SEC61-alpha family. In terms of assembly, the SEC61 channel-forming translocon complex consists of channel-forming core components SEC61A1, SEC61B and SEC61G and different auxiliary components such as SEC62 and SEC63. The SEC61 channel associates with the multi-pass translocon (MPT) complex.

Its subcellular location is the endoplasmic reticulum membrane. Functionally, component of SEC61 channel-forming translocon complex that mediates transport of signal peptide-containing precursor polypeptides across the endoplasmic reticulum (ER). Forms a ribosome receptor and a gated pore in the ER membrane, both functions required for cotranslational translocation of nascent polypeptides. May cooperate with auxiliary protein SEC62, SEC63 and HSPA5/BiP to enable post-translational transport of small presecretory proteins. The SEC61 channel is also involved in ER membrane insertion of transmembrane proteins: it mediates membrane insertion of the first few transmembrane segments of proteins, while insertion of subsequent transmembrane regions of multi-pass membrane proteins is mediated by the multi-pass translocon (MPT) complex. In Boreogadus saida (Polar cod), this protein is Protein transport protein Sec61 subunit alpha (sec61a).